The sequence spans 509 residues: Phosphoprotein (509 aa).

3 disordered regions span residues 33-84, 131-236, and 256-281; these read LESW…LGFR, VQAN…DGNS, and PESRWESSERNASVGSVPKSARSAKT. Residues 44-65 show a composition bias toward polar residues; the sequence is GRATPNPDTSEGDHQNINQSCS. The segment covering 146-157 has biased composition (acidic residues); sequence DGSDDSDVDSGP. The residue at position 151 (serine 151) is a Phosphoserine. The span at 178-187 shows a compositional bias: basic and acidic residues; that stretch reads RSTDVEKLEG. Residues 221-236 are compositionally biased toward polar residues; it reads SRPSAQSIKKGTDGNS. Residues 303–376 form a multimerization region; sequence SEFEYEDDLF…LSSIMIAIPG (74 aa). Positions 459 to 509 are interaction with the nucleocapsid (N-RNA); sequence SSRSVIRSIIKSSKLNIDHKDYLLDLLNDVKGSKDLKEFHKMLTAILAKQP.

Belongs to the morbillivirus P protein family. Homotetramer. Interacts (via multimerization domain) with polymerase L; this interaction forms the polymerase L-P complex. Interacts (via N-terminus) with N0 (via Ncore); this interaction allows P to chaperon N0 to avoid N polymerization before encapsidation. Interacts (via C-terminus) with N-RNA template; this interaction positions the polymerase on the template for both transcription and replication. Interacts with host ISG15; this interaction disrupts the activity of the N0-P complex. In terms of processing, phosphorylation on serines by host CK2 is necessary for the formation of viral factories.

Essential cofactor of the RNA polymerase L that plays a central role in the transcription and replication by forming the polymerase complex with RNA polymerase L and recruiting L to the genomic N-RNA template for RNA synthesis. Also plays a central role in the encapsidation of nascent RNA chains by forming the encapsidation complex with the nucleocapsid protein N (N-P complex). Acts as a chaperone for newly synthesized free N protein, so-called N0, allowing encapsidation of nascent RNA chains during replication. The nucleoprotein protein N prevents excessive phosphorylation of P, which leads to down-regulation of viral transcription/ replication. Participates, together with N, in the formation of viral factories (viroplasms), which are large inclusions in the host cytoplasm where replication takes place. In Capra hircus (Goat), this protein is Phosphoprotein (P/V).